The chain runs to 518 residues: Laccase (518 aa).

The first 21 residues, Met1 to Ala21, serve as a signal peptide directing secretion. 2 Plastocyanin-like domains span residues Ile23–Tyr148 and Ile160–Tyr302. N-linked (GlcNAc...) asparagine glycans are attached at residues Asn72 and Asn75. Cu cation-binding residues include His85, His87, His130, and His132. 2 disulfide bridges follow: Cys106-Cys507 and Cys138-Cys226. Asn229 is a glycosylation site (N-linked (GlcNAc...) asparagine). The segment at Val308 to Thr330 is disordered. 3 N-linked (GlcNAc...) asparagine glycosylation sites follow: Asn354, Asn362, and Asn398. Residues Ser369–Asp489 enclose the Plastocyanin-like 3 domain. Residues His416, His419, His421, His471, Cys472, His473, and His477 each contribute to the Cu cation site.

It belongs to the multicopper oxidase family. Cu cation serves as cofactor.

The protein resides in the secreted. It carries out the reaction 4 hydroquinone + O2 = 4 benzosemiquinone + 2 H2O. Functionally, lignin degradation and detoxification of lignin-derived products. Cleaves the C-C and C-O bonds of some phenolic lignin model compounds (such as O- and P-quinols, aminophenols and phenylenediamine). May also be involved in synthesis of phenoxazinone pigments. The protein is Laccase (LCC3-1) of Pycnoporus cinnabarinus (Cinnabar-red polypore).